Consider the following 404-residue polypeptide: Zinc transporter 10 (404 aa).

Residues 1-22 (MESSSSSSYIPFIRQIAASVSA) form the signal peptide. Residues 23-49 (ASCDAVVGGGGDKDEECRDEAAALRLK) lie on the Extracellular side of the membrane. A helical membrane pass occupies residues 50–70 (MVAVAAILIAGAAGVAIPLVG). At 71 to 86 (RRRRGGGGGGGGGASS) the chain is on the cytoplasmic side. A helical transmembrane segment spans residues 87–107 (GGLFVLAKAFAAGVILATGFV). At 108–129 (HMLHDAEHALSNPCLPHSPWRR) the chain is on the extracellular side. The helical transmembrane segment at 130–150 (FPFPGFVAMLAALATLVVDFV) threads the bilayer. Residues 151 to 248 (GTHFYERKHR…GHEEGPSARH (98 aa)) are Cytoplasmic-facing. The chain crosses the membrane as a helical span at residues 249 to 269 (VVVSQILELGIVSHSVIIGLS). The Extracellular portion of the chain corresponds to 270–280 (LGVSQSPCTIK). Residues 281–301 (PLVAALSFHQFFEGFALGGCI) traverse the membrane as a helical segment. The Cytoplasmic segment spans residues 302–311 (SEAQLKNFSA). The chain crosses the membrane as a helical span at residues 312 to 332 (FLMAFFFAITTPAGITVGAAV). The Extracellular portion of the chain corresponds to 333-343 (ASFYNPNSPRA). Residues 344–364 (LVVEGILDSMSAGILIYMALV) form a helical membrane-spanning segment. Topologically, residues 365–383 (DLIAADFLSRKMSCNPRLQ) are cytoplasmic. A helical transmembrane segment spans residues 384 to 404 (VGSYIALFLGAMAMAALALWA).

This sequence belongs to the ZIP transporter (TC 2.A.5) family.

Its subcellular location is the cell membrane. Its function is as follows. Zinc transporter that may be involved in zinc uptake from the rhizosphere. The chain is Zinc transporter 10 (ZIP10) from Oryza sativa subsp. japonica (Rice).